A 443-amino-acid chain; its full sequence is ATP-dependent protease ATPase subunit HslU (443 aa).

ATP is bound by residues Val18 and 60-65 (GVGKTE). A disordered region spans residues 136-158 (LPPPRDFNEDSQRTNADSSTRQL). Over residues 148–157 (RTNADSSTRQ) the composition is skewed to polar residues. ATP is bound by residues Asp256, Glu321, and Arg393.

This sequence belongs to the ClpX chaperone family. HslU subfamily. In terms of assembly, a double ring-shaped homohexamer of HslV is capped on each side by a ring-shaped HslU homohexamer. The assembly of the HslU/HslV complex is dependent on binding of ATP.

Its subcellular location is the cytoplasm. In terms of biological role, ATPase subunit of a proteasome-like degradation complex; this subunit has chaperone activity. The binding of ATP and its subsequent hydrolysis by HslU are essential for unfolding of protein substrates subsequently hydrolyzed by HslV. HslU recognizes the N-terminal part of its protein substrates and unfolds these before they are guided to HslV for hydrolysis. The polypeptide is ATP-dependent protease ATPase subunit HslU (Marinobacter nauticus (strain ATCC 700491 / DSM 11845 / VT8) (Marinobacter aquaeolei)).